The primary structure comprises 379 residues: Class V chitinase CHIT5b (379 aa).

The N-terminal stretch at 1–26 (MANILNLKHLLTLALILLALATKSST) is a signal peptide. Positions 34 to 379 (RVKGIYWLEN…TQASKAWKLV (346 aa)) constitute a GH18 domain. N-linked (GlcNAc...) asparagine glycosylation is found at Asn-68, Asn-109, and Asn-128. The active-site Proton donor is Glu-147. N-linked (GlcNAc...) asparagine glycans are attached at residues Asn-192, Asn-227, and Asn-241.

This sequence belongs to the glycosyl hydrolase 18 family. Chitinase class V subfamily.

It carries out the reaction Random endo-hydrolysis of N-acetyl-beta-D-glucosaminide (1-&gt;4)-beta-linkages in chitin and chitodextrins.. Its pathway is glycan degradation; chitin degradation. In terms of biological role, possesses chitinase activity in vitro toward glycol chitin, carboxymethyl-chitin, colloidal chitin, and the chitin oligosaccharides (N-acetylglucosamine) (GlcNAc)6 and (GlcNAc)5. Hydrolyzes (GlcNAc)6 into (GlcNAc)4 and (GlcNAc)2, or two (GlcNAc)3 molecules. Has the capacity to reduce hyphal growth of the fungus Trichoderma viride in an agar-plate bioassay. The protein is Class V chitinase CHIT5b of Medicago truncatula (Barrel medic).